A 215-amino-acid polypeptide reads, in one-letter code: Thiopurine S-methyltransferase (215 aa).

Residues W10, L45, E66, and R123 each contribute to the S-adenosyl-L-methionine site.

This sequence belongs to the class I-like SAM-binding methyltransferase superfamily. TPMT family.

Its subcellular location is the cytoplasm. It catalyses the reaction S-adenosyl-L-methionine + a thiopurine = S-adenosyl-L-homocysteine + a thiopurine S-methylether.. The sequence is that of Thiopurine S-methyltransferase from Pseudomonas putida (strain W619).